A 232-amino-acid polypeptide reads, in one-letter code: 5'-methylthioadenosine/S-adenosylhomocysteine nucleosidase (232 aa).

Glu12 acts as the Proton acceptor in catalysis. Substrate-binding positions include Gly78, Met153, and 174-175; that span reads ME. Asp198 functions as the Proton donor in the catalytic mechanism.

Belongs to the PNP/UDP phosphorylase family. MtnN subfamily.

The enzyme catalyses S-adenosyl-L-homocysteine + H2O = S-(5-deoxy-D-ribos-5-yl)-L-homocysteine + adenine. The catalysed reaction is S-methyl-5'-thioadenosine + H2O = 5-(methylsulfanyl)-D-ribose + adenine. It carries out the reaction 5'-deoxyadenosine + H2O = 5-deoxy-D-ribose + adenine. It functions in the pathway amino-acid biosynthesis; L-methionine biosynthesis via salvage pathway; S-methyl-5-thio-alpha-D-ribose 1-phosphate from S-methyl-5'-thioadenosine (hydrolase route): step 1/2. Its function is as follows. Catalyzes the irreversible cleavage of the glycosidic bond in both 5'-methylthioadenosine (MTA) and S-adenosylhomocysteine (SAH/AdoHcy) to adenine and the corresponding thioribose, 5'-methylthioribose and S-ribosylhomocysteine, respectively. Also cleaves 5'-deoxyadenosine, a toxic by-product of radical S-adenosylmethionine (SAM) enzymes, into 5-deoxyribose and adenine. This chain is 5'-methylthioadenosine/S-adenosylhomocysteine nucleosidase, found in Anoxybacillus flavithermus (strain DSM 21510 / WK1).